The primary structure comprises 106 residues: Foxo1-corepressor (106 aa).

The interval 1 to 44 is disordered; sequence MGGPTRRHQEEGSAECLGGPSTRAAPGPGLRDFHFTTAGPSKAD. Residues 78–87 carry the Nuclear export signal motif; sequence IGTLYIRLDL. Threonine 93 is subject to Phosphothreonine; by PKA.

As to quaternary structure, interacts with FOXO1 (via N-terminal domain); the interaction is direct, occurs in a forskolin-independent manner that prevents SIRT1 binding to FOXO1. Interacts with FOXO3. Does not interact with FOXO4. Phosphorylated at Thr-93 by PKA, leading to import into the nucleus. As to expression, expressed in adipocytes. Expressed in brown and white adipose tissue but not in liver. Protein levels in brown and white adipose tissues decrease following fasting (at protein level). Expressed in white and brown adipose tissues. Expressed in adipocytes. Not expressed in liver, skeletal muscle and brain.

The protein resides in the cytoplasm. Its subcellular location is the cytosol. The protein localises to the nucleus. Its function is as follows. Regulator of adipocytes that acts by repressing FOXO1 transcriptional activity. Acts by promoting acetylation of FOXO1, both by preventing the interaction between FOXO1 and SIRT1 deacetylase, and by mediating acetyltransferase activity in vitro. Regulates insulin sensitivity and energy metabolism. This is Foxo1-corepressor (Fcor) from Mus musculus (Mouse).